We begin with the raw amino-acid sequence, 130 residues long: Small ribosomal subunit protein uS9 (130 aa).

The protein belongs to the universal ribosomal protein uS9 family.

This is Small ribosomal subunit protein uS9 from Paraburkholderia phytofirmans (strain DSM 17436 / LMG 22146 / PsJN) (Burkholderia phytofirmans).